Consider the following 393-residue polypeptide: 4-O-methyl-glucuronoyl methylesterase (393 aa).

A signal peptide spans Met-1–Ala-19. Gln-20 bears the Pyrrolidone carboxylic acid mark. Cys-22 and Cys-56 form a disulfide bridge. N-linked (GlcNAc...) asparagine glycosylation is found at Asn-103 and Asn-168. Positions Gly-203–Gly-208 match the GXSYXG catalytic site motif motif. 2 disulfide bridges follow: Cys-204-Cys-340 and Cys-236-Cys-312. Ser-205 acts as the Nucleophile in catalysis. Residues Lys-209, Gln-251, Glu-259, and Trp-303 each contribute to the substrate site. Residue His-339 is the Proton donor/acceptor of the active site.

This sequence belongs to the carbohydrate esterase 15 (CE15) family.

The protein resides in the secreted. It catalyses the reaction a 4-O-methyl-alpha-D-glucuronosyl ester derivative + H2O = 4-O-methyl-alpha-D-glucuronate derivative + an alcohol + H(+). Its function is as follows. Glucuronoyl esterase which may play a significant role in biomass degradation, as it is considered to disconnect hemicellulose from lignin through the hydrolysis of the ester bond between 4-O-methyl-D-glucuronic acid residues of glucuronoxylans and aromatic alcohols of lignin. The polypeptide is 4-O-methyl-glucuronoyl methylesterase (Schizophyllum commune (strain H4-8 / FGSC 9210) (Split gill fungus)).